Consider the following 256-residue polypeptide: Gluconate 5-dehydrogenase (256 aa).

15–39 (LVTGASRGIGLTLAKGLARYGAEVV) is a binding site for NADP(+). Ser147 is a substrate binding site. Residue Tyr160 is the Proton acceptor of the active site.

It belongs to the short-chain dehydrogenases/reductases (SDR) family. In terms of assembly, homodimer.

The protein localises to the cytoplasm. The enzyme catalyses D-gluconate + NADP(+) = 5-dehydro-D-gluconate + NADPH + H(+). Catalyzes the reversible NADP-dependent oxidation of gluconate to 5-ketogluconate. Is involved in the non-phosphorylative, ketogenic oxidation of glucose. Is almost inactive with NAD as cosubstrate. Displays high substrate specificity since D-Glucose, D-sorbitol, and D-mannitol are not oxidized by the enzyme, and 2-ketogluconate and L-sorbose are not reduced. Can accept D-fructose as a substrate, with a rate that is only 10% of the rate of 5-ketogluconate reduction. This Gluconobacter oxydans (strain 621H) (Gluconobacter suboxydans) protein is Gluconate 5-dehydrogenase.